The following is a 146-amino-acid chain: Hemoglobin subunit beta (146 aa).

Residues 2 to 146 form the Globin domain; sequence HWSAEEKQLI…VAHALARKYH (145 aa). 2 residues coordinate heme b: H63 and H92.

Belongs to the globin family. Heterotetramer of two alpha chains and two beta chains. Red blood cells.

Its function is as follows. Involved in oxygen transport from the lung to the various peripheral tissues. This is Hemoglobin subunit beta (HBB) from Aptenodytes forsteri (Emperor penguin).